Here is a 98-residue protein sequence, read N- to C-terminus: Co-chaperonin GroES (98 aa).

This sequence belongs to the GroES chaperonin family. Heptamer of 7 subunits arranged in a ring. Interacts with the chaperonin GroEL.

It is found in the cytoplasm. Together with the chaperonin GroEL, plays an essential role in assisting protein folding. The GroEL-GroES system forms a nano-cage that allows encapsulation of the non-native substrate proteins and provides a physical environment optimized to promote and accelerate protein folding. GroES binds to the apical surface of the GroEL ring, thereby capping the opening of the GroEL channel. This Micrococcus luteus (strain ATCC 4698 / DSM 20030 / JCM 1464 / CCM 169 / CCUG 5858 / IAM 1056 / NBRC 3333 / NCIMB 9278 / NCTC 2665 / VKM Ac-2230) (Micrococcus lysodeikticus) protein is Co-chaperonin GroES.